The following is a 296-amino-acid chain: Nucleotide-binding protein Pnec_1620 (296 aa).

8-15 (GISGSGKS) contributes to the ATP binding site. 57–60 (DARR) lines the GTP pocket.

The protein belongs to the RapZ-like family.

Displays ATPase and GTPase activities. The polypeptide is Nucleotide-binding protein Pnec_1620 (Polynucleobacter necessarius subsp. necessarius (strain STIR1)).